A 184-amino-acid polypeptide reads, in one-letter code: MTNTVTIELKIGYKYAAEVVKAVLGVILFHRQFSTVPARTIDVLDITVPTLVGAELNEQLATKAAEFIDTIRNEAGANGQMILLLYERSPKKSWFGKGNTIPWEQWILHTTILEEGDSYQESSLSLEAAVEQIVQAVNLRSLSYLPPVAMDSGNYPYEIVTPTSTEGWGSLLKRMIIENVSGGD.

The protein belongs to the ATG101 family. In terms of assembly, component of the atg1 kinase complex composed of at least atg1, atg13, atg17 and atg101. Interacts directly with atg13.

The protein localises to the cytoplasm. Its subcellular location is the nucleus. It localises to the preautophagosomal structure membrane. Its function is as follows. Autophagy factor required for autophagosome formation. Component of the atg1 kinase complex in which it stabilizes atg13. Is also responsible for recruiting downstream factors to the autophagosome-formation site. Has a role in meiosis and sporulation. The sequence is that of Autophagy-related protein 101 from Schizosaccharomyces pombe (strain 972 / ATCC 24843) (Fission yeast).